The primary structure comprises 403 residues: MDKLSIKDLSPEGKKVLVRVDFNVPIKDGKILDDVRIRSAMPTINYLLKRDAAIILVSHLGRPKGDMFEEAYSLAPIVPVLEGYLGHHVPLSPDCVGEVARQAVAQLSPGRVLLLENVRFHRGEEHPEEDPSFAVELAAYADFYVNDAFGTSHRKHASVYRVPQMFPDRAAAGFLMEKELEFLGQHLLVEPKRPFTAILGGAKVSSKIGVIEALLSRVDNLVLAGGMGYTFLKAMNQQVGNSLVEETGIPLAKRVLEKARTQGVKIYLPVDAKVARRCETGEDWQELSIQEGIPEGFSGFDIGSKTIALFSEVIQDSATVFWNGPVGVYEVPPFDQGSKAIAQCLASHSSAVTVVGGGDAAAVVALAGCTSQISHVSTGGGASLEFLEKGYLPGTEILSPARS.

Residues 21 to 23, Arg-36, 59 to 62, Arg-119, and Arg-154 contribute to the substrate site; these read DFN and HLGR. Residues Lys-207, Gly-299, Glu-330, and 357 to 360 each bind ATP; that span reads GGDA.

This sequence belongs to the phosphoglycerate kinase family. As to quaternary structure, monomer.

The protein localises to the cytoplasm. The catalysed reaction is (2R)-3-phosphoglycerate + ATP = (2R)-3-phospho-glyceroyl phosphate + ADP. Its pathway is carbohydrate degradation; glycolysis; pyruvate from D-glyceraldehyde 3-phosphate: step 2/5. The protein is Phosphoglycerate kinase (pgk) of Chlamydia muridarum (strain MoPn / Nigg).